Here is a 196-residue protein sequence, read N- to C-terminus: Spore maturation protein A (196 aa).

A run of 4 helical transmembrane segments spans residues 1–21, 37–57, 133–153, and 163–183; these read MVNI…MCNG, AITI…LMKI, ITFL…VIAV, and TDIV…AIII.

It localises to the cell membrane. In terms of biological role, involved in spore core dehydration; might be involved in the transport of something into or out of the forespore or could be required for some modification of the cortex peptidoglycan structure. In Bacillus subtilis (strain 168), this protein is Spore maturation protein A (spmA).